Here is a 420-residue protein sequence, read N- to C-terminus: Glucose-1-phosphate adenylyltransferase (420 aa).

Alpha-D-glucose 1-phosphate contacts are provided by residues Y107, G173, E188–K189, and S206.

Belongs to the bacterial/plant glucose-1-phosphate adenylyltransferase family. In terms of assembly, homotetramer.

It catalyses the reaction alpha-D-glucose 1-phosphate + ATP + H(+) = ADP-alpha-D-glucose + diphosphate. The protein operates within glycan biosynthesis; glycogen biosynthesis. Its function is as follows. Involved in the biosynthesis of ADP-glucose, a building block required for the elongation reactions to produce glycogen. Catalyzes the reaction between ATP and alpha-D-glucose 1-phosphate (G1P) to produce pyrophosphate and ADP-Glc. The polypeptide is Glucose-1-phosphate adenylyltransferase (Shewanella baltica (strain OS185)).